We begin with the raw amino-acid sequence, 872 residues long: MLCDNLENWCLRMSDRMWARQRFITQGCIERGRLKASAESESKVILYRAPLGYGKSVQVAFEAGTQGREEGGVAYINTRSYPGSGEITDSLLAALILYQIKGREPWSVIQSNDDIIESLRDTLCNAKNPIKICIDGIGEAEHGVGLVENLICETPNNVKFYIAPSNAGALARLSMMAGVVTYGAHDLVFTEEEVCELPGMHSAKAKNVIEATGGWPALVGLMCHTSNPNLPAATWPETRSYFRNNLLNALPNNTREFICKAAMLEEISVACYDYVYKTEEAHKEIPFINENYALFTPTESSRECMVMHPVLREYLRGLFDSIQRERRSYVLKRVAFWHWRRGEYLHSINAAQEASDHSWARAVSDSIILDVALRQGEIEVLRTWFEKVPVRTIKKIASLSISYAWILYFSQQARQAEKILASSTESCSRGLDNLDEKGWRKLVDAVGKATQDQFAQSQTLCQQWIDTFGERNMVGKGAALTCQAYIASSDRRFEDLEQLLHRGAVANQSSNQHYAFVWLKTAELQAEIFKGDIAHAMSILLEANKTAEKMGVSKTFLNKMLGSLELQILHEKSPSLISYESAEESFNFALNYGVTDILWGCTQTFSSFLYQQGLRDRAMAILEQTRIAACERDLPRLNMLAKIQLAEFTLINDEELEPPILPDESELTFLPNQNQAIRARIALVNSMYRLRLGKQFGVAEKYAKKALQSASAISDARTKIAAQYCQALAVFGLGSSKLAKRTIIDADQLTEHLSCYFTRDWIKEALMSFSPIARDLFDTLPESAETNATKDLEVRKEEADARPKLTNTQSTITIKQISLLKCVSSGMTNKEIAERLLITEDTVKWHLKKIFSELKVTNRVRAVSEARLRGLL.

The 66-residue stretch at 805-870 (LTNTQSTITI…RAVSEARLRG (66 aa)) folds into the HTH luxR-type domain. Residues 829–848 (NKEIAERLLITEDTVKWHLK) constitute a DNA-binding region (H-T-H motif).

Its pathway is hydrocarbon metabolism; alkane degradation. Functionally, this protein activates the expression of AlkB1 in the presence of alkanes. The sequence is that of HTH-type transcriptional regulator AlkS (alkS) from Alcanivorax borkumensis (strain ATCC 700651 / DSM 11573 / NCIMB 13689 / SK2).